We begin with the raw amino-acid sequence, 308 residues long: Ribosomal RNA large subunit methyltransferase F (308 aa).

This sequence belongs to the methyltransferase superfamily. METTL16/RlmF family.

The protein localises to the cytoplasm. The enzyme catalyses adenosine(1618) in 23S rRNA + S-adenosyl-L-methionine = N(6)-methyladenosine(1618) in 23S rRNA + S-adenosyl-L-homocysteine + H(+). Its function is as follows. Specifically methylates the adenine in position 1618 of 23S rRNA. The protein is Ribosomal RNA large subunit methyltransferase F of Salmonella paratyphi A (strain ATCC 9150 / SARB42).